The following is a 220-amino-acid chain: Elongation factor Ts, chloroplastic (220 aa).

Belongs to the EF-Ts family.

It is found in the plastid. It localises to the chloroplast. Functionally, associates with the EF-Tu.GDP complex and induces the exchange of GDP to GTP. It remains bound to the aminoacyl-tRNA.EF-Tu.GTP complex up to the GTP hydrolysis stage on the ribosome. This Pyropia yezoensis (Susabi-nori) protein is Elongation factor Ts, chloroplastic (tsf).